Reading from the N-terminus, the 271-residue chain is 4-diphosphocytidyl-2-C-methyl-D-erythritol kinase (271 aa).

The active site involves K8. ATP is bound at residue 90–100 (PFGAGLGGGSA). D132 is a catalytic residue.

This sequence belongs to the GHMP kinase family. IspE subfamily.

The catalysed reaction is 4-CDP-2-C-methyl-D-erythritol + ATP = 4-CDP-2-C-methyl-D-erythritol 2-phosphate + ADP + H(+). It participates in isoprenoid biosynthesis; isopentenyl diphosphate biosynthesis via DXP pathway; isopentenyl diphosphate from 1-deoxy-D-xylulose 5-phosphate: step 3/6. Functionally, catalyzes the phosphorylation of the position 2 hydroxy group of 4-diphosphocytidyl-2C-methyl-D-erythritol. The sequence is that of 4-diphosphocytidyl-2-C-methyl-D-erythritol kinase from Parabacteroides distasonis (strain ATCC 8503 / DSM 20701 / CIP 104284 / JCM 5825 / NCTC 11152).